Reading from the N-terminus, the 59-residue chain is Conotoxin reg3.15 (59 aa).

The N-terminal stretch at 1–15 (RVLLTICLLLFPLTA) is a signal peptide. Residues 16 to 44 (IPLGGDQPAERMRNVRSAVQDPRFDSVGW) constitute a propeptide that is removed on maturation. 3 disulfide bridges follow: cysteine 45–cysteine 59, cysteine 46–cysteine 55, and cysteine 51–cysteine 58.

This sequence belongs to the conotoxin M superfamily. Expressed by the venom duct.

It is found in the secreted. In Conus regius (Crown cone), this protein is Conotoxin reg3.15.